Reading from the N-terminus, the 142-residue chain is Large ribosomal subunit protein uL13 (142 aa).

It belongs to the universal ribosomal protein uL13 family. Part of the 50S ribosomal subunit.

In terms of biological role, this protein is one of the early assembly proteins of the 50S ribosomal subunit, although it is not seen to bind rRNA by itself. It is important during the early stages of 50S assembly. This is Large ribosomal subunit protein uL13 from Klebsiella pneumoniae (strain 342).